Reading from the N-terminus, the 185-residue chain is Celestoxin (185 aa).

Residues 1 to 20 form the signal peptide; the sequence is MKFIAAVLLVALLCPKDSTS. The propeptide occupies 21–148; that stretch reads LASRLSGLLG…GLPVALPVSV (128 aa).

In terms of tissue distribution, expressed by the mandibular venom gland.

It is found in the secreted. Has a hypotensive activity. This chain is Celestoxin, found in Caribicus warreni (Haitian giant galliwasp).